The chain runs to 461 residues: Toxin CfTX-B (461 aa).

The first 24 residues, 1–24, serve as a signal peptide directing secretion; sequence MDPRISSRLRALALLVFVISITDG. A propeptide spanning residues 25–31 is cleaved from the precursor; the sequence is IPNRAKR.

It belongs to the jellyfish toxin family. Type II subfamily. As to quaternary structure, oligomer. Post-translationally, contains 2 disulfide bonds. As to expression, nematocytes.

Its subcellular location is the secreted. It localises to the nematocyst. It is found in the target cell membrane. Functionally, the fraction containing this toxin and CfTX-B shows potent hemolytic activity. This fraction causes minor effects on the cardiovascular system of anesthetized rats (at 25 ug/kg), since it has no significant effects on heart rate but produces relatively small increases in mean arterial pressure. This Chironex fleckeri (Australian box jellyfish) protein is Toxin CfTX-B.